The primary structure comprises 56 residues: uncharacterized protein (56 aa).

This is an uncharacterized protein from Dictyostelium discoideum (Social amoeba).